Reading from the N-terminus, the 111-residue chain is Disintegrin acostatin-alpha (111 aa).

Positions 1-20 (MIQVLLVTLCLAVFPYQGSS) are cleaved as a signal peptide. A propeptide spanning residues 21–46 (IILESGNVNDYEVVYPRKVTALPKGA) is cleaved from the precursor. A Disintegrin domain is found at 47 to 111 (IQPKNPCCDA…GDCPRKHFYA (65 aa)). Gln48 carries the post-translational modification Pyrrolidone carboxylic acid; in Disintegrin acostatin-alpha, processed form. Intrachain disulfides connect Cys53–Cys76, Cys67–Cys73, Cys72–Cys97, and Cys85–Cys104. The Cell attachment site signature appears at 89 to 91 (RGD). The propeptide occupies 110 to 111 (YA).

It belongs to the disintegrin family. Dimeric disintegrin subfamily. In terms of assembly, heterodimer with subunit beta; disulfide-linked. As to expression, expressed by the venom gland.

The protein localises to the secreted. Functionally, inhibits fibrinogen interaction with platelets. Acts by binding to alpha-IIb/beta-3 (ITGA2B/ITGB3) on the platelet surface and inhibits ADP-induced platelet aggregation in human platelet-rich plasma. The chain is Disintegrin acostatin-alpha from Agkistrodon contortrix contortrix (Southern copperhead).